A 454-amino-acid chain; its full sequence is Nuclear distribution protein PAC1-1 (454 aa).

A LisH domain is found at 9–41 (QAEELHRALIAYLSSNNLTSTAAALRAEIGLGE). The interval 71-93 (RHTSQLSNATPTSRQNKDPVNWL) is disordered. Polar residues predominate over residues 73–84 (TSQLSNATPTSR). 7 WD repeats span residues 104 to 145 (SHRQ…RTIK), 147 to 187 (HTKT…KNIR), 191 to 236 (GHDH…CVKT), 239 to 278 (GHAE…PEPK), 283 to 342 (GHEH…IKIL), 344 to 383 (GHDN…RCVK), and 388 to 450 (AHAH…LNVR).

This sequence belongs to the WD repeat LIS1/nudF family. Self-associates. Interacts with NDL1 and dynein.

It localises to the cytoplasm. Its subcellular location is the cytoskeleton. The protein localises to the spindle pole. Positively regulates the activity of the minus-end directed microtubule motor protein dynein. May enhance dynein-mediated microtubule sliding by targeting dynein to the microtubule plus end. Required for nuclear migration during vegetative growth as well as development. Required for retrograde early endosome (EE) transport from the hyphal tip. Required for localization of dynein to the mitotic spindle poles. Recruits additional proteins to the dynein complex at SPBs. This is Nuclear distribution protein PAC1-1 from Chaetomium globosum (strain ATCC 6205 / CBS 148.51 / DSM 1962 / NBRC 6347 / NRRL 1970) (Soil fungus).